We begin with the raw amino-acid sequence, 124 residues long: Large ribosomal subunit protein bL12 (124 aa).

This sequence belongs to the bacterial ribosomal protein bL12 family. In terms of assembly, homodimer. Part of the ribosomal stalk of the 50S ribosomal subunit. Forms a multimeric L10(L12)X complex, where L10 forms an elongated spine to which 2 to 4 L12 dimers bind in a sequential fashion. Binds GTP-bound translation factors.

Forms part of the ribosomal stalk which helps the ribosome interact with GTP-bound translation factors. Is thus essential for accurate translation. The sequence is that of Large ribosomal subunit protein bL12 from Aromatoleum aromaticum (strain DSM 19018 / LMG 30748 / EbN1) (Azoarcus sp. (strain EbN1)).